The following is a 255-amino-acid chain: tRNA pseudouridine synthase A (255 aa).

Catalysis depends on Asp53, which acts as the Nucleophile. Substrate is bound at residue Tyr113.

It belongs to the tRNA pseudouridine synthase TruA family. As to quaternary structure, homodimer.

The catalysed reaction is uridine(38/39/40) in tRNA = pseudouridine(38/39/40) in tRNA. Formation of pseudouridine at positions 38, 39 and 40 in the anticodon stem and loop of transfer RNAs. In Acidiphilium cryptum (strain JF-5), this protein is tRNA pseudouridine synthase A.